The sequence spans 244 residues: Ribonuclease PH (244 aa).

Phosphate is bound by residues Arg86 and 124–126 (GTR).

The protein belongs to the RNase PH family. In terms of assembly, homohexameric ring arranged as a trimer of dimers.

The enzyme catalyses tRNA(n+1) + phosphate = tRNA(n) + a ribonucleoside 5'-diphosphate. Its function is as follows. Phosphorolytic 3'-5' exoribonuclease that plays an important role in tRNA 3'-end maturation. Removes nucleotide residues following the 3'-CCA terminus of tRNAs; can also add nucleotides to the ends of RNA molecules by using nucleoside diphosphates as substrates, but this may not be physiologically important. Probably plays a role in initiation of 16S rRNA degradation (leading to ribosome degradation) during starvation. The protein is Ribonuclease PH of Oceanobacillus iheyensis (strain DSM 14371 / CIP 107618 / JCM 11309 / KCTC 3954 / HTE831).